Here is a 30-residue protein sequence, read N- to C-terminus: Photosystem I reaction center subunit XII (30 aa).

The chain crosses the membrane as a helical span at residues 7-29; it reads LIAFFLAFTAGILAIKLGQALYD.

The protein belongs to the PsaM family.

It is found in the plastid. Its subcellular location is the chloroplast thylakoid membrane. This is Photosystem I reaction center subunit XII from Pinus thunbergii (Japanese black pine).